A 123-amino-acid polypeptide reads, in one-letter code: Guanine nucleotide exchange factor MSS4 (123 aa).

Met1 is subject to N-acetylmethionine. One can recognise an MSS4 domain in the interval 9–123 (ELVSAEGRNR…YVALERVSHE (115 aa)). 4 residues coordinate Zn(2+): Cys23, Cys26, Cys94, and Cys97.

The protein belongs to the DSS4/MSS4 family. Interacts with RAB8A.

In terms of biological role, guanine-nucleotide-releasing protein that acts on members of the SEC4/YPT1/RAB subfamily. Stimulates GDP release from both YPT1, RAB3A and RAB10, but is less active on these proteins than on the SEC4 protein. Might play a general role in vesicular transport. In Mus musculus (Mouse), this protein is Guanine nucleotide exchange factor MSS4.